We begin with the raw amino-acid sequence, 608 residues long: Protein Spindly (608 aa).

An N-acetylmethionine modification is found at M1. Positions 1 to 445 (MEADITNLRN…LKLKYEPEER (445 aa)) form a coiled coil. The segment at 465–487 (PEETEETAAASATEDGVSRLPPH) is disordered. Phosphoserine is present on residues S516, S518, and S558.

It belongs to the Spindly family. In terms of assembly, interacts with KNTC1 and ZW10. These interactions appear weak and may be transient or indirect. Interacts with dynein intermediate chain and dynactin (DCTN1). Interacts with the catalytically active form of USP45. Post-translationally, monoubiquitinated with'Lys-48' linkage. Deubiquitinated by USP45.

It localises to the cytoplasm. The protein resides in the cytoskeleton. It is found in the microtubule organizing center. The protein localises to the centrosome. Its subcellular location is the chromosome. It localises to the centromere. The protein resides in the kinetochore. It is found in the nucleus. The protein localises to the spindle pole. In terms of biological role, required for the localization of dynein and dynactin to the mitotic kintochore. Dynein is believed to control the initial lateral interaction between the kinetochore and spindle microtubules and to facilitate the subsequent formation of end-on kinetochore-microtubule attachments mediated by the NDC80 complex. Also required for correct spindle orientation. Does not appear to be required for the removal of spindle assembly checkpoint (SAC) proteins from the kinetochore upon bipolar spindle attachment. Acts as an adapter protein linking the dynein motor complex to various cargos and converts dynein from a non-processive to a highly processive motor in the presence of dynactin. Facilitates the interaction between dynein and dynactin and activates dynein processivity (the ability to move along a microtubule for a long distance without falling off the track). Plays a role in cell migration. In Mus musculus (Mouse), this protein is Protein Spindly (Spdl1).